Reading from the N-terminus, the 435-residue chain is Serine--tRNA ligase (435 aa).

242-244 (TAE) contributes to the L-serine binding site. 273 to 275 (RSE) provides a ligand contact to ATP. Residue E296 coordinates L-serine. 360 to 363 (EISS) contacts ATP. S396 serves as a coordination point for L-serine.

It belongs to the class-II aminoacyl-tRNA synthetase family. Type-1 seryl-tRNA synthetase subfamily. Homodimer. The tRNA molecule binds across the dimer.

The protein localises to the cytoplasm. The enzyme catalyses tRNA(Ser) + L-serine + ATP = L-seryl-tRNA(Ser) + AMP + diphosphate + H(+). The catalysed reaction is tRNA(Sec) + L-serine + ATP = L-seryl-tRNA(Sec) + AMP + diphosphate + H(+). It functions in the pathway aminoacyl-tRNA biosynthesis; selenocysteinyl-tRNA(Sec) biosynthesis; L-seryl-tRNA(Sec) from L-serine and tRNA(Sec): step 1/1. Catalyzes the attachment of serine to tRNA(Ser). Is also able to aminoacylate tRNA(Sec) with serine, to form the misacylated tRNA L-seryl-tRNA(Sec), which will be further converted into selenocysteinyl-tRNA(Sec). This chain is Serine--tRNA ligase, found in Vibrio vulnificus (strain YJ016).